The chain runs to 155 residues: UPF0266 membrane protein lin0773 (155 aa).

The next 3 membrane-spanning stretches (helical) occupy residues 8-28, 46-66, and 70-90; these read IFLF…DAVI, RWDG…NTFF, and PFST…ICFF.

This sequence belongs to the UPF0266 family.

It is found in the cell membrane. In Listeria innocua serovar 6a (strain ATCC BAA-680 / CLIP 11262), this protein is UPF0266 membrane protein lin0773.